The following is a 153-amino-acid chain: Small heat shock protein ibp (153 aa).

Residues 35-153 (KIISDSVPPY…KIQKIQINVK (119 aa)) enclose the sHSP domain.

The protein belongs to the small heat shock protein (HSP20) family.

This chain is Small heat shock protein ibp (ibp), found in Buchnera aphidicola subsp. Thelaxes suberi.